A 150-amino-acid chain; its full sequence is Phosphoribosyl-AMP cyclohydrolase (150 aa).

Residue D92 coordinates Mg(2+). Zn(2+) is bound at residue C93. The Mg(2+) site is built by D94 and D96. Residues C111 and C118 each contribute to the Zn(2+) site.

Belongs to the PRA-CH family. Homodimer. Mg(2+) is required as a cofactor. The cofactor is Zn(2+).

Its subcellular location is the cytoplasm. It catalyses the reaction 1-(5-phospho-beta-D-ribosyl)-5'-AMP + H2O = 1-(5-phospho-beta-D-ribosyl)-5-[(5-phospho-beta-D-ribosylamino)methylideneamino]imidazole-4-carboxamide. Its pathway is amino-acid biosynthesis; L-histidine biosynthesis; L-histidine from 5-phospho-alpha-D-ribose 1-diphosphate: step 3/9. Functionally, catalyzes the hydrolysis of the adenine ring of phosphoribosyl-AMP. The chain is Phosphoribosyl-AMP cyclohydrolase from Agrobacterium fabrum (strain C58 / ATCC 33970) (Agrobacterium tumefaciens (strain C58)).